A 575-amino-acid chain; its full sequence is uncharacterized protein (575 aa).

6 consecutive transmembrane segments (helical) span residues 16-36, 50-70, 132-152, 154-174, 243-263, and 264-284; these read FFLD…FPLI, WGLI…SSAL, PEDL…MLFI, WQLA…ALYF, ISYM…TWFV, and IRGS…NVLF. Positions 16 to 299 constitute an ABC transmembrane type-1 domain; it reads FFLDFFSAIA…INAIIEMYPR (284 aa). The ABC transporter domain maps to 333-567; the sequence is IRYKHVSFGY…GGLYSRLHQA (235 aa). 366–373 is a binding site for ATP; sequence GPSGAGKS.

This sequence belongs to the ABC transporter superfamily.

It localises to the cell membrane. The protein localises to the membrane raft. This is an uncharacterized protein from Bacillus subtilis (strain 168).